An 863-amino-acid chain; its full sequence is FO synthase (863 aa).

Radical SAM core domains follow at residues 91–343 (ITYS…APPN) and 551–792 (VTFV…SHIQ). Positions 92–424 (TYSRKVFIPV…PRVRGHVVAL (333 aa)) are cofG-like. [4Fe-4S] cluster contacts are provided by C105, C109, C112, C565, C569, and C572. Residues 528–861 (DGPALEAVTA…RQRTTTYALR (334 aa)) form a cofH-like region.

The protein in the N-terminal section; belongs to the radical SAM superfamily. CofG family. This sequence in the C-terminal section; belongs to the radical SAM superfamily. CofH family. The cofactor is [4Fe-4S] cluster.

The catalysed reaction is 5-amino-6-(D-ribitylamino)uracil + L-tyrosine + S-adenosyl-L-methionine = 5-amino-5-(4-hydroxybenzyl)-6-(D-ribitylimino)-5,6-dihydrouracil + 2-iminoacetate + 5'-deoxyadenosine + L-methionine + H(+). It carries out the reaction 5-amino-5-(4-hydroxybenzyl)-6-(D-ribitylimino)-5,6-dihydrouracil + S-adenosyl-L-methionine = 7,8-didemethyl-8-hydroxy-5-deazariboflavin + 5'-deoxyadenosine + L-methionine + NH4(+) + H(+). It participates in cofactor biosynthesis; coenzyme F0 biosynthesis. Functionally, catalyzes the radical-mediated synthesis of 7,8-didemethyl-8-hydroxy-5-deazariboflavin (FO) from 5-amino-6-(D-ribitylamino)uracil and L-tyrosine. This Mycobacterium leprae (strain TN) protein is FO synthase (fbiC).